Reading from the N-terminus, the 124-residue chain is uncharacterized protein (124 aa).

Residues 1 to 28 (MGTSLRSQSFREPRPSYGRLHESQGRSL) are disordered. The span at 9–28 (SFREPRPSYGRLHESQGRSL) shows a compositional bias: basic and acidic residues.

This is an uncharacterized protein from Mus musculus (Mouse).